The chain runs to 128 residues: Holo-[acyl-carrier-protein] synthase (128 aa).

The Mg(2+) site is built by aspartate 8 and glutamate 60.

It belongs to the P-Pant transferase superfamily. AcpS family. It depends on Mg(2+) as a cofactor.

It is found in the cytoplasm. The catalysed reaction is apo-[ACP] + CoA = holo-[ACP] + adenosine 3',5'-bisphosphate + H(+). In terms of biological role, transfers the 4'-phosphopantetheine moiety from coenzyme A to a Ser of acyl-carrier-protein. The protein is Holo-[acyl-carrier-protein] synthase of Anaeromyxobacter sp. (strain K).